A 201-amino-acid chain; its full sequence is U1 small nuclear ribonucleoprotein C (201 aa).

The Matrin-type zinc-finger motif lies at 4 to 36 (YYCEYCDIYLTHSSPVGRRQHNQGRKHISAKIE). Residues 137–154 (IQKPYNNFDNKNNNYNNK) are compositionally biased toward low complexity. Positions 137-176 (IQKPYNNFDNKNNNYNNKPITNSSYKNDKQDYRNNNENND) are disordered.

This sequence belongs to the U1 small nuclear ribonucleoprotein C family. U1 snRNP is composed of the 7 core Sm proteins B/B', D1, D2, D3, E, F and G that assemble in a heptameric protein ring on the Sm site of the small nuclear RNA to form the core snRNP, and at least 3 U1 snRNP-specific proteins U1-70K, U1-A and U1-C. U1-C interacts with U1 snRNA and the 5' splice-site region of the pre-mRNA.

It is found in the nucleus. In terms of biological role, component of the spliceosomal U1 snRNP, which is essential for recognition of the pre-mRNA 5' splice-site and the subsequent assembly of the spliceosome. U1-C is directly involved in initial 5' splice-site recognition for both constitutive and regulated alternative splicing. The interaction with the 5' splice-site seems to precede base-pairing between the pre-mRNA and the U1 snRNA. Stimulates commitment or early (E) complex formation by stabilizing the base pairing of the 5' end of the U1 snRNA and the 5' splice-site region. The chain is U1 small nuclear ribonucleoprotein C from Plasmodium yoelii yoelii.